Reading from the N-terminus, the 467-residue chain is tRNA-2-methylthio-N(6)-dimethylallyladenosine synthase (467 aa).

One can recognise an MTTase N-terminal domain in the interval 22–138; that stretch reads GSYWITTFGC…LETLLNKVET (117 aa). 6 residues coordinate [4Fe-4S] cluster: Cys31, Cys67, Cys101, Cys173, Cys177, and Cys180. Residues 159–396 enclose the Radical SAM core domain; that stretch reads RDSSICAWVN…NSLVEIKAKE (238 aa). The TRAM domain maps to 399–467; it reads VRYKDRVEEV…AFSLSGVIEN (69 aa).

This sequence belongs to the methylthiotransferase family. MiaB subfamily. Monomer. Requires [4Fe-4S] cluster as cofactor.

Its subcellular location is the cytoplasm. The enzyme catalyses N(6)-dimethylallyladenosine(37) in tRNA + (sulfur carrier)-SH + AH2 + 2 S-adenosyl-L-methionine = 2-methylsulfanyl-N(6)-dimethylallyladenosine(37) in tRNA + (sulfur carrier)-H + 5'-deoxyadenosine + L-methionine + A + S-adenosyl-L-homocysteine + 2 H(+). Its function is as follows. Catalyzes the methylthiolation of N6-(dimethylallyl)adenosine (i(6)A), leading to the formation of 2-methylthio-N6-(dimethylallyl)adenosine (ms(2)i(6)A) at position 37 in tRNAs that read codons beginning with uridine. In Prochlorococcus marinus (strain MIT 9211), this protein is tRNA-2-methylthio-N(6)-dimethylallyladenosine synthase.